The chain runs to 88 residues: Phosphocarrier protein HPr (88 aa).

The 88-residue stretch at 1–88 folds into the HPr domain; that stretch reads MEKREFNIIA…DTMKKEGLAE (88 aa). The Pros-phosphohistidine intermediate role is filled by His15. Ser46 bears the Phosphoserine; by HPrK/P mark.

This sequence belongs to the HPr family.

It is found in the cytoplasm. With respect to regulation, phosphorylation on Ser-46 inhibits the phosphoryl transfer from enzyme I to HPr. In terms of biological role, general (non sugar-specific) component of the phosphoenolpyruvate-dependent sugar phosphotransferase system (sugar PTS). This major carbohydrate active-transport system catalyzes the phosphorylation of incoming sugar substrates concomitantly with their translocation across the cell membrane. The phosphoryl group from phosphoenolpyruvate (PEP) is transferred to the phosphoryl carrier protein HPr by enzyme I. Phospho-HPr then transfers it to the PTS EIIA domain. Functionally, P-Ser-HPr interacts with the catabolite control protein A (CcpA), forming a complex that binds to DNA at the catabolite response elements cre, operator sites preceding a large number of catabolite-regulated genes. Thus, P-Ser-HPr is a corepressor in carbon catabolite repression (CCR), a mechanism that allows bacteria to coordinate and optimize the utilization of available carbon sources. P-Ser-HPr also plays a role in inducer exclusion, in which it probably interacts with several non-PTS permeases and inhibits their transport activity. This is Phosphocarrier protein HPr (ptsH) from Lacticaseibacillus casei (Lactobacillus casei).